The primary structure comprises 67 residues: MRMFKITACVPSQTRIRTQRELQNTYFTKLVPYENWFREQQRIQKMGGKIVKVELFTGKPGVNTGLA.

Residues 1–56 (MRMFKITACVPSQTRIRTQRELQNTYFTKLVPYENWFREQQRIQKMGGKIVKVELF) form the CpcD-like domain.

The protein belongs to the phycobilisome linker protein family.

Its subcellular location is the cellular thylakoid membrane. In terms of biological role, rod linker protein, associated with allophycocyanin. Linker polypeptides determine the state of aggregation and the location of the disk-shaped phycobiliprotein units within the phycobilisome and modulate their spectroscopic properties in order to mediate a directed and optimal energy transfer. The chain is Phycobilisome 7.8 kDa linker polypeptide, allophycocyanin-associated, core (apcC) from Thermosynechococcus vestitus (strain NIES-2133 / IAM M-273 / BP-1).